The following is a 485-amino-acid chain: Isocitrate dehydrogenase [NADP], chloroplastic/mitochondrial (485 aa).

The transit peptide at 1–65 directs the protein to the chloroplast and mitochondrion; sequence MLNKLTHGVF…VQFHRASAVR (65 aa). NADP(+)-binding positions include 147 to 149 and Arg154; that span reads TIT. Thr149 is a binding site for substrate. Substrate is bound by residues 166 to 172, Arg181, and Arg204; that span reads SPNGTIR. Asp323 is a Mn(2+) binding site. Lys331 serves as a coordination point for NADP(+). A Mn(2+)-binding site is contributed by Asp346. NADP(+) contacts are provided by residues 381–386 and Asn399; that span reads GTVTRH.

This sequence belongs to the isocitrate and isopropylmalate dehydrogenases family. It depends on Mg(2+) as a cofactor. Requires Mn(2+) as cofactor.

The protein resides in the plastid. Its subcellular location is the chloroplast. The protein localises to the mitochondrion. It catalyses the reaction D-threo-isocitrate + NADP(+) = 2-oxoglutarate + CO2 + NADPH. May be involved in response to oxidative stresses. This Arabidopsis thaliana (Mouse-ear cress) protein is Isocitrate dehydrogenase [NADP], chloroplastic/mitochondrial.